The primary structure comprises 163 residues: MSKTRVIYPGTFDPITNGHVDLVTRASRMFDEVVVAIAIGHHKNPLFSLEERVALAQSSLGHLSNVEFVGFDGLLVNFFKEQKATAVLRGLRAVSDFEYEFQLANMNRQLDPHFEAVFLTPSEQYSFISSTLIREIARLKGDVTKFVPQAVVEAFERKHQQGW.

Threonine 11 contacts substrate. Residues 11-12 and histidine 19 contribute to the ATP site; that span reads TF. Substrate contacts are provided by lysine 43, leucine 75, and arginine 89. Residues 90-92, glutamate 100, and 125-131 contribute to the ATP site; these read GLR and YSFISST.

Belongs to the bacterial CoaD family. In terms of assembly, homohexamer. It depends on Mg(2+) as a cofactor.

Its subcellular location is the cytoplasm. The enzyme catalyses (R)-4'-phosphopantetheine + ATP + H(+) = 3'-dephospho-CoA + diphosphate. The protein operates within cofactor biosynthesis; coenzyme A biosynthesis; CoA from (R)-pantothenate: step 4/5. Its function is as follows. Reversibly transfers an adenylyl group from ATP to 4'-phosphopantetheine, yielding dephospho-CoA (dPCoA) and pyrophosphate. This Acinetobacter baumannii (strain ACICU) protein is Phosphopantetheine adenylyltransferase.